A 190-amino-acid chain; its full sequence is Holliday junction branch migration complex subunit RuvA (190 aa).

A domain I region spans residues 1–64 (MIGSLTGIIE…DNLTQLYGFL (64 aa)). The interval 65-142 (DKQEQDYMRM…KMPIEETLII (78 aa)) is domain II. A region of interest (flexible linker) is located at residue lysine 143. The segment at 143-190 (KEDDSLAALISLGYDKLKAFNAIQEIKSDFPNANIQEIIRKALQKLSQ) is domain III.

This sequence belongs to the RuvA family. In terms of assembly, homotetramer. Forms an RuvA(8)-RuvB(12)-Holliday junction (HJ) complex. HJ DNA is sandwiched between 2 RuvA tetramers; dsDNA enters through RuvA and exits via RuvB. An RuvB hexamer assembles on each DNA strand where it exits the tetramer. Each RuvB hexamer is contacted by two RuvA subunits (via domain III) on 2 adjacent RuvB subunits; this complex drives branch migration. In the full resolvosome a probable DNA-RuvA(4)-RuvB(12)-RuvC(2) complex forms which resolves the HJ.

The protein resides in the cytoplasm. The RuvA-RuvB-RuvC complex processes Holliday junction (HJ) DNA during genetic recombination and DNA repair, while the RuvA-RuvB complex plays an important role in the rescue of blocked DNA replication forks via replication fork reversal (RFR). RuvA specifically binds to HJ cruciform DNA, conferring on it an open structure. The RuvB hexamer acts as an ATP-dependent pump, pulling dsDNA into and through the RuvAB complex. HJ branch migration allows RuvC to scan DNA until it finds its consensus sequence, where it cleaves and resolves the cruciform DNA. The sequence is that of Holliday junction branch migration complex subunit RuvA from Ehrlichia canis (strain Jake).